The sequence spans 419 residues: UDP-N-acetylglucosamine 1-carboxyvinyltransferase 2 (419 aa).

Phosphoenolpyruvate is bound at residue 22 to 23; it reads KN. UDP-N-acetyl-alpha-D-glucosamine is bound at residue R92. Residue C116 is the Proton donor of the active site. C116 carries the 2-(S-cysteinyl)pyruvic acid O-phosphothioketal modification. Residues 121–125, D306, and I328 contribute to the UDP-N-acetyl-alpha-D-glucosamine site; that span reads RPIDL.

It belongs to the EPSP synthase family. MurA subfamily.

The protein localises to the cytoplasm. It carries out the reaction phosphoenolpyruvate + UDP-N-acetyl-alpha-D-glucosamine = UDP-N-acetyl-3-O-(1-carboxyvinyl)-alpha-D-glucosamine + phosphate. The protein operates within cell wall biogenesis; peptidoglycan biosynthesis. In terms of biological role, cell wall formation. Adds enolpyruvyl to UDP-N-acetylglucosamine. This Streptococcus pyogenes serotype M1 protein is UDP-N-acetylglucosamine 1-carboxyvinyltransferase 2.